We begin with the raw amino-acid sequence, 1211 residues long: Transient receptor potential cation channel subfamily A member 1 homolog (1211 aa).

The Cytoplasmic segment spans residues 1–811 (MSKKSLGLDV…LKYKWNRLGR (811 aa)). 17 ANK repeats span residues 49 to 79 (NLRS…AVNA), 83 to 112 (DFMT…LPNT), 116 to 169 (EGDT…EIDP), 173 to 202 (YQLT…DVDA), 206 to 235 (NKMT…NVTK), 239 to 270 (RLNT…AIKA), 277 to 306 (EKKT…KNSC), 311 to 340 (REKE…NKNE), 344 to 374 (VKAV…NIDV), 378 to 407 (QGLT…NLTI), 411 to 440 (DERT…KKNK), 473 to 502 (DQNT…SITQ), 506 to 535 (DEET…RLLL), 540 to 569 (MGNS…DKEA), 573 to 602 (YQKT…QIES), 605 to 634 (DTKT…TIDR), and 638 to 669 (EGKT…NLMI). The helical transmembrane segment at 812-832 (PMYYFALFMYLVFIVSLTQYV) threads the bilayer. Over 833–870 (RHTKAPYNVWNEESYYDSEYFDENETCPQINTTKPDVV) the chain is Extracellular. N-linked (GlcNAc...) asparagine glycosylation is found at Asn-856 and Asn-863. Residues 871–891 (WKIIIQTLAVCQILVECFQLF) form a helical membrane-spanning segment. The Cytoplasmic portion of the chain corresponds to 892-894 (QRK). Residues 895–915 (FAYLVNWENWIDCFIYSTALI) form a helical membrane-spanning segment. At 916–932 (TVYDFSECSATSGVRQN) the chain is on the extracellular side. A helical membrane pass occupies residues 933–953 (WQWILAALCIFFGWINLLFMI). The Cytoplasmic segment spans residues 954–975 (RKMPRFGIFVVMFVDIVKTFFR). Residues 976-996 (FFPVFVLFIIAFSSSFYVILQ) form a helical membrane-spanning segment. At 997–1004 (NRPEFSTI) the chain is on the extracellular side. Residues 1005 to 1025 (FMSPLKTTVMMIGEFEFTGIF) constitute an intramembrane region (pore-forming). The Extracellular segment spans residues 1026-1048 (HGDETTHAEKMFGPAHTAVACAL). Residues 1049–1069 (FFFFCIIMTILLMNLLVGLAV) traverse the membrane as a helical segment. Over 1070–1193 (DDIKGVQEKA…EKQVRLEAII (124 aa)) the chain is Cytoplasmic. The stretch at 1149–1191 (EMYEREAEFTSEMTQKLQNQAAKLKNIQENIDVMYEKQVRLEA) forms a coiled coil.

This sequence belongs to the transient receptor (TC 1.A.4) family. Homotetramer. Expressed in many sensory neurons, including OLQ and IL1 neurons.

The protein localises to the cell membrane. Receptor-activated non-selective cation channel involved in the nose-touch response and foraging behavior. Contributes to the neural responses of sensory neurons to touch, particularly after repeated mechanical stimulation. Has no apparent role in thermosensory or chemosensory behaviors. This is Transient receptor potential cation channel subfamily A member 1 homolog (trpa-1) from Caenorhabditis elegans.